The chain runs to 190 residues: Homeobox protein SEBOX (190 aa).

A compositionally biased stretch (low complexity) spans 1 to 11; the sequence is MPSPVDASSAD. Disordered regions lie at residues 1-24 and 82-161; these read MPSP…RKRT and ILSP…VHPS. The homeobox DNA-binding region spans 19 to 78; the sequence is HRRKRTTFSKGQLLELERAFAAWPYPNISTHEHLAWVTCLPEAKVQVWFQKRWAKIIKNR. Residues 89-100 are compositionally biased toward polar residues; the sequence is CPQSSCSLPDTL.

The protein belongs to the paired homeobox family.

It is found in the nucleus. Functionally, probable transcription factor involved in the control of specification of mesoderm and endoderm. The chain is Homeobox protein SEBOX (SEBOX) from Homo sapiens (Human).